We begin with the raw amino-acid sequence, 216 residues long: Cell division protein SepF (216 aa).

Residues 22–126 (EYVEEPDQAR…PVVDDGGPLA (105 aa)) are disordered. Composition is skewed to basic and acidic residues over residues 28-50 (DQAR…REFV), 62-80 (SRRD…RPRV), and 106-118 (ARAE…RAPV).

It belongs to the SepF family. As to quaternary structure, homodimer. Interacts with FtsZ.

Its subcellular location is the cytoplasm. Its function is as follows. Cell division protein that is part of the divisome complex and is recruited early to the Z-ring. Probably stimulates Z-ring formation, perhaps through the cross-linking of FtsZ protofilaments. Its function overlaps with FtsA. The chain is Cell division protein SepF from Rhodococcus erythropolis (strain PR4 / NBRC 100887).